A 33-amino-acid polypeptide reads, in one-letter code: Cytochrome b6-f complex subunit 8 (33 aa).

The chain crosses the membrane as a helical span at residues 2-22; the sequence is LFTVAWASLAAMFSFSIAMVV.

Belongs to the PetN family. The 4 large subunits of the cytochrome b6-f complex are cytochrome b6, subunit IV (17 kDa polypeptide, PetD), cytochrome f and the Rieske protein, while the 4 small subunits are PetG, PetL, PetM and PetN. The complex functions as a dimer.

The protein localises to the cellular thylakoid membrane. Its function is as follows. Component of the cytochrome b6-f complex, which mediates electron transfer between photosystem II (PSII) and photosystem I (PSI), cyclic electron flow around PSI, and state transitions. The protein is Cytochrome b6-f complex subunit 8 of Parasynechococcus marenigrum (strain WH8102).